A 364-amino-acid chain; its full sequence is Protein L-Myc (364 aa).

Disordered stretches follow at residues 41–81, 111–172, and 219–285; these read TSPP…HSKG, DRLA…EIDV, and PPES…KRKN. A compositionally biased stretch (basic and acidic residues) spans 228–245; that stretch reads ASERGPQEEVLERDAAGE. The bHLH domain occupies 281–333; that stretch reads TKRKNHNFLERKRRNDLRSRFLALRDQVPTLASCSKAPKVVILSKALEYLQAL. The tract at residues 333–361 is leucine-zipper; that stretch reads LVGAEKRMATEKRQLRCRQQQLQKRIAYL.

Efficient DNA binding requires dimerization with another bHLH protein. Binds DNA as a heterodimer with MAX.

It is found in the nucleus. The polypeptide is Protein L-Myc (MYCL) (Homo sapiens (Human)).